Here is a 79-residue protein sequence, read N- to C-terminus: uncharacterized protein (79 aa).

It localises to the mitochondrion. This is an uncharacterized protein from Marchantia polymorpha (Common liverwort).